Here is a 366-residue protein sequence, read N- to C-terminus: Peptide chain release factor 2 (366 aa).

N5-methylglutamine is present on Gln251.

Belongs to the prokaryotic/mitochondrial release factor family. Post-translationally, methylated by PrmC. Methylation increases the termination efficiency of RF2.

The protein resides in the cytoplasm. Functionally, peptide chain release factor 2 directs the termination of translation in response to the peptide chain termination codons UGA and UAA. This Listeria monocytogenes serotype 4b (strain F2365) protein is Peptide chain release factor 2 (prfB).